Consider the following 150-residue polypeptide: Large ribosomal subunit protein bL9 (150 aa).

It belongs to the bacterial ribosomal protein bL9 family.

Binds to the 23S rRNA. The chain is Large ribosomal subunit protein bL9 from Yersinia enterocolitica serotype O:8 / biotype 1B (strain NCTC 13174 / 8081).